Here is a 226-residue protein sequence, read N- to C-terminus: ATP synthase F(0) complex subunit a (226 aa).

A run of 6 helical transmembrane segments spans residues 5–25 (LFAPFMIPVMLGIPITTLIII), 68–88 (WSLMLISLFLFIASTNLLGML), 97–117 (QLSMNVGMAIPLWAGTVATGF), 136–156 (FLIPMLVIIETISLFIQPVAL), 179–199 (LVLMSTSLFTAIITFTILALL), and 201–221 (ILEFRVALIQAYVFTLLVSLY).

The protein belongs to the ATPase A chain family. As to quaternary structure, component of the ATP synthase complex composed at least of ATP5F1A/subunit alpha, ATP5F1B/subunit beta, ATP5MC1/subunit c (homooctomer), MT-ATP6/subunit a, MT-ATP8/subunit 8, ATP5ME/subunit e, ATP5MF/subunit f, ATP5MG/subunit g, ATP5MK/subunit k, ATP5MJ/subunit j, ATP5F1C/subunit gamma, ATP5F1D/subunit delta, ATP5F1E/subunit epsilon, ATP5PF/subunit F6, ATP5PB/subunit b, ATP5PD/subunit d, ATP5PO/subunit OSCP. ATP synthase complex consists of a soluble F(1) head domain (subunits alpha(3) and beta(3)) - the catalytic core - and a membrane F(0) domain - the membrane proton channel (subunits c, a, 8, e, f, g, k and j). These two domains are linked by a central stalk (subunits gamma, delta, and epsilon) rotating inside the F1 region and a stationary peripheral stalk (subunits F6, b, d, and OSCP). Interacts with DNAJC30; interaction is direct.

Its subcellular location is the mitochondrion inner membrane. It carries out the reaction H(+)(in) = H(+)(out). Its function is as follows. Subunit a, of the mitochondrial membrane ATP synthase complex (F(1)F(0) ATP synthase or Complex V) that produces ATP from ADP in the presence of a proton gradient across the membrane which is generated by electron transport complexes of the respiratory chain. ATP synthase complex consist of a soluble F(1) head domain - the catalytic core - and a membrane F(1) domain - the membrane proton channel. These two domains are linked by a central stalk rotating inside the F(1) region and a stationary peripheral stalk. During catalysis, ATP synthesis in the catalytic domain of F(1) is coupled via a rotary mechanism of the central stalk subunits to proton translocation. With the subunit c (ATP5MC1), forms the proton-conducting channel in the F(0) domain, that contains two crucial half-channels (inlet and outlet) that facilitate proton movement from the mitochondrial intermembrane space (IMS) into the matrix. Protons are taken up via the inlet half-channel and released through the outlet half-channel, following a Grotthuss mechanism. The protein is ATP synthase F(0) complex subunit a of Balaenoptera musculus (Blue whale).